The sequence spans 988 residues: Putative disease resistance protein RGA4 (988 aa).

The NB-ARC domain occupies 137 to 439; it reads AAAATRETGF…MAHGFLLSKG (303 aa). 184-191 contributes to the ATP binding site; it reads GMGGLGKT. LRR repeat units follow at residues 526-548, 549-572, 574-595, 596-620, 638-662, 674-696, 751-776, 784-808, 829-851, 852-876, 878-900, 901-925, 927-950, and 966-988; these read FVSL…SIGD, LLHL…LCKL, NLQT…QTSK, LSSL…GLLT, LGEL…KNDT, LQSL…EVKV, LPCL…DVHS, FPSL…EGEE, LSSV…SISN, LSTL…MFTS, TNLE…SLTS, LNAL…GLEG, TSLT…LQHL, and KRCD…LDIH.

The protein belongs to the disease resistance NB-LRR family.

In terms of biological role, disease resistance protein. Resistance proteins guard the plant against pathogens that contain an appropriate avirulence protein via a direct or indirect interaction with this avirulence protein. That triggers a defense system which restricts the pathogen growth. The protein is Putative disease resistance protein RGA4 (RGA4) of Solanum bulbocastanum (Wild potato).